The primary structure comprises 852 residues: G-type lectin S-receptor-like serine/threonine-protein kinase At4g03230 (852 aa).

Positions 1 to 19 (MILSVFFYMFLLHIRRLDC) are cleaved as a signal peptide. The region spanning 20–154 (FVAVQDSKTL…GNEANVVWQS (135 aa)) is the Bulb-type lectin domain. The Extracellular segment spans residues 20–444 (FVAVQDSKTL…RGRGRYGEAK (425 aa)). N-linked (GlcNAc...) asparagine glycans are attached at residues N37, N59, N171, N187, N234, and N243. The region spanning 285 to 321 (PRDECSVYNACGNFGSCNSKNEEMCKCLPGFRPNFLE) is the EGF-like domain. Disulfide bonds link C289-C301 and C295-C309. Residues 339-426 (CGKDGVVVGD…SRNVFIRVAV (88 aa)) enclose the PAN domain. N-linked (GlcNAc...) asparagine glycosylation occurs at N352. 2 disulfides stabilise this stretch: C373–C400 and C377–C383. Residues 445-465 (TPVVLIIVVTFTSAAILVVLS) form a helical membrane-spanning segment. The Cytoplasmic segment spans residues 466–852 (STASYVFLQR…ELTITLEDGR (387 aa)). The Protein kinase domain occupies 532 to 819 (FSNANKLGQG…TLPTPKQPAF (288 aa)). ATP is bound by residues 538–546 (LGQGGFGPV) and K560. Phosphoserine is present on S566. The tract at residues 621-638 (KLCQRLDWKMRCNIILGI) is caM-binding. The Proton acceptor role is filled by D657. Phosphoserine is present on residues S661 and S674. T691 bears the Phosphothreonine mark. The segment at 826–852 (SSSKASSSTKPETCSENELTITLEDGR) is disordered. 2 positions are modified to phosphoserine: S831 and S840. A compositionally biased stretch (polar residues) spans 834-845 (TKPETCSENELT). T847 is subject to Phosphothreonine.

It belongs to the protein kinase superfamily. Ser/Thr protein kinase family.

It is found in the cell membrane. The enzyme catalyses L-seryl-[protein] + ATP = O-phospho-L-seryl-[protein] + ADP + H(+). It carries out the reaction L-threonyl-[protein] + ATP = O-phospho-L-threonyl-[protein] + ADP + H(+). The chain is G-type lectin S-receptor-like serine/threonine-protein kinase At4g03230 from Arabidopsis thaliana (Mouse-ear cress).